The chain runs to 396 residues: Alpha-galactosidase 2 (396 aa).

An N-terminal signal peptide occupies residues 1-25; sequence MVLLSFSLRFIAFTLTITLTQIADG. Disulfide bonds link Cys52-Cys84 and Cys132-Cys163. An N-linked (GlcNAc...) asparagine glycan is attached at Asn55. Substrate is bound by residues 82–83 and Lys159; that span reads DD. The active-site Nucleophile is Asp161. Residues 194 to 198, Arg212, and Asp216 contribute to the substrate site; that span reads EWGQE. Asp216 (proton donor) is an active-site residue. N-linked (GlcNAc...) asparagine glycosylation is found at Asn343 and Asn354.

This sequence belongs to the glycosyl hydrolase 27 family. Homodimer.

The protein localises to the secreted. The protein resides in the cell wall. It localises to the extracellular space. It is found in the apoplast. The catalysed reaction is Hydrolysis of terminal, non-reducing alpha-D-galactose residues in alpha-D-galactosides, including galactose oligosaccharides, galactomannans and galactolipids.. In terms of biological role, may regulate leaf (and possibly other organ) development by functioning in cell wall loosening and cell wall expansion. The chain is Alpha-galactosidase 2 from Arabidopsis thaliana (Mouse-ear cress).